The chain runs to 60 residues: Large ribosomal subunit protein bL32 (60 aa).

It belongs to the bacterial ribosomal protein bL32 family.

This chain is Large ribosomal subunit protein bL32, found in Streptococcus suis (strain 05ZYH33).